A 358-amino-acid chain; its full sequence is tRNA (guanine(26)-N(2))-dimethyltransferase (358 aa).

Residues 5–354 (VIRREGKAVF…ATYGEVERVL (350 aa)) enclose the Trm1 methyltransferase domain. Positions 39, 69, 87, 113, and 114 each coordinate S-adenosyl-L-methionine.

It belongs to the class I-like SAM-binding methyltransferase superfamily. Trm1 family.

It catalyses the reaction guanosine(26) in tRNA + 2 S-adenosyl-L-methionine = N(2)-dimethylguanosine(26) in tRNA + 2 S-adenosyl-L-homocysteine + 2 H(+). Dimethylates a single guanine residue at position 26 of a number of tRNAs using S-adenosyl-L-methionine as donor of the methyl groups. The protein is tRNA (guanine(26)-N(2))-dimethyltransferase of Pyrobaculum calidifontis (strain DSM 21063 / JCM 11548 / VA1).